A 79-amino-acid chain; its full sequence is Cytochrome b (79 aa).

The next 3 helical transmembrane spans lie at 1 to 7 (TALFLAM), 31 to 52 (WLIR…YLHI), and 67 to 79 (WNVG…LTMM). The heme b site is built by His37 and His51.

This sequence belongs to the cytochrome b family. The cytochrome bc1 complex contains 3 respiratory subunits (MT-CYB, CYC1 and UQCRFS1), 2 core proteins (UQCRC1 and UQCRC2) and probably 6 low-molecular weight proteins. Heme b is required as a cofactor.

The protein localises to the mitochondrion inner membrane. In terms of biological role, component of the ubiquinol-cytochrome c reductase complex (complex III or cytochrome b-c1 complex) that is part of the mitochondrial respiratory chain. The b-c1 complex mediates electron transfer from ubiquinol to cytochrome c. Contributes to the generation of a proton gradient across the mitochondrial membrane that is then used for ATP synthesis. This is Cytochrome b (mt-cyb) from Amphilophus citrinellus (Midas cichlid).